Consider the following 284-residue polypeptide: RNase adapter protein RapZ (284 aa).

Residue 8–15 participates in ATP binding; it reads GRSGSGKS. A GTP-binding site is contributed by 56–59; sequence DVRN. An RNA-binding region spans residues 266 to 284; that stretch reads RARGKNVQSRHRTLEKRKQ.

The protein belongs to the RapZ-like family. RapZ subfamily. As to quaternary structure, homotrimer.

In terms of biological role, modulates the synthesis of GlmS, by affecting the processing and stability of the regulatory small RNA GlmZ. When glucosamine-6-phosphate (GlcN6P) concentrations are high in the cell, RapZ binds GlmZ and targets it to cleavage by RNase E. Consequently, GlmZ is inactivated and unable to activate GlmS synthesis. Under low GlcN6P concentrations, RapZ is sequestered and inactivated by an other regulatory small RNA, GlmY, preventing GlmZ degradation and leading to synthesis of GlmS. The protein is RNase adapter protein RapZ of Yersinia pseudotuberculosis serotype O:1b (strain IP 31758).